A 206-amino-acid polypeptide reads, in one-letter code: Large ribosomal subunit protein uL4 (206 aa).

The segment at Met-63–Val-93 is disordered. Residues Tyr-64–Ala-77 are compositionally biased toward basic residues.

It belongs to the universal ribosomal protein uL4 family. In terms of assembly, part of the 50S ribosomal subunit.

In terms of biological role, one of the primary rRNA binding proteins, this protein initially binds near the 5'-end of the 23S rRNA. It is important during the early stages of 50S assembly. It makes multiple contacts with different domains of the 23S rRNA in the assembled 50S subunit and ribosome. Its function is as follows. Forms part of the polypeptide exit tunnel. The sequence is that of Large ribosomal subunit protein uL4 from Sinorhizobium fredii (strain NBRC 101917 / NGR234).